The sequence spans 245 residues: Triosephosphate isomerase (245 aa).

N4–K6 serves as a coordination point for substrate. The Electrophile role is filled by H91. Catalysis depends on E161, which acts as the Proton acceptor. Residues G167, S207, and G228–G229 each bind substrate.

Belongs to the triosephosphate isomerase family. Homodimer.

It localises to the cytoplasm. The enzyme catalyses D-glyceraldehyde 3-phosphate = dihydroxyacetone phosphate. The protein operates within carbohydrate biosynthesis; gluconeogenesis. Its pathway is carbohydrate degradation; glycolysis; D-glyceraldehyde 3-phosphate from glycerone phosphate: step 1/1. Functionally, involved in the gluconeogenesis. Catalyzes stereospecifically the conversion of dihydroxyacetone phosphate (DHAP) to D-glyceraldehyde-3-phosphate (G3P). The sequence is that of Triosephosphate isomerase from Chlorobaculum tepidum (strain ATCC 49652 / DSM 12025 / NBRC 103806 / TLS) (Chlorobium tepidum).